A 187-amino-acid chain; its full sequence is Epididymal-specific lipocalin-10 (187 aa).

Positions 1-19 are cleaved as a signal peptide; it reads MRQGLLVLALVLVLVLVLA. A disulfide bridge connects residues cysteine 90 and cysteine 163. A glycan (N-linked (GlcNAc...) asparagine) is linked at asparagine 149. An N6-acetyllysine modification is found at lysine 170.

The protein belongs to the calycin superfamily. Lipocalin family.

Its subcellular location is the secreted. Its function is as follows. May play a role in male fertility. May act as a retinoid carrier protein within the epididymis. This is Epididymal-specific lipocalin-10 (LCN10) from Homo sapiens (Human).